Reading from the N-terminus, the 611-residue chain is DNA mismatch repair protein MutL (611 aa).

A disordered region spans residues 353–387 (NRQAAGGNHFATPAPAAAPRPASTASSSWQRQEPV). Residues 363 to 380 (ATPAPAAAPRPASTASSS) are compositionally biased toward low complexity.

It belongs to the DNA mismatch repair MutL/HexB family.

This protein is involved in the repair of mismatches in DNA. It is required for dam-dependent methyl-directed DNA mismatch repair. May act as a 'molecular matchmaker', a protein that promotes the formation of a stable complex between two or more DNA-binding proteins in an ATP-dependent manner without itself being part of a final effector complex. This chain is DNA mismatch repair protein MutL, found in Erwinia tasmaniensis (strain DSM 17950 / CFBP 7177 / CIP 109463 / NCPPB 4357 / Et1/99).